The chain runs to 956 residues: DNA repair endonuclease UVH1 (956 aa).

Residues 256-272 (RRQLDPIWHTLGKRTKQ) carry the Nuclear localization signal motif. Disordered regions lie at residues 343–363 (HVKN…SVEA), 516–593 (TTDM…RPSG), and 697–718 (SSTE…GGRK). The segment covering 697-711 (SSTEFPASSTQNSLT) has biased composition (polar residues). Positions 725–805 (QVIVDMREFM…IPVLLIEFSQ (81 aa)) constitute an ERCC4 domain.

This sequence belongs to the XPF family. Heterodimer with ERCC1/RAD10. As to expression, isoform 1 and isoform 2 are widely expressed, predominantly in flowers, meristems and stems. Isoform 3 is detected at low levels.

It is found in the nucleus. Functionally, seems to be involved in nucleotide excision repair (NER) of damaged DNA (dark repair mechanism). Involved in repair of UV light, and probably oxidative damage. The UVH1/RAD1-ERCC1/RAD10 complex may act as an endonuclease making DNA incision 5' to the lesion site. In vitro, is implicated in double strand breaks (DSBs) repair and is required for homologous recombination in the presence of non-homologous overhangs. May mediate the induction of a DNA-damage sensitive cell-cycle checkpoint during the G2 phase. This chain is DNA repair endonuclease UVH1 (UVH1), found in Arabidopsis thaliana (Mouse-ear cress).